The primary structure comprises 616 residues: Schwannomin-interacting protein 1 homolog (616 aa).

A compositionally biased stretch (acidic residues) spans 38–50 (ESDLTDSDREDDP). Disordered regions lie at residues 38–71 (ESDL…GQDS), 204–251 (LKQT…PDTF), and 292–320 (SSLE…YSNQ). Polar residues-rich tracts occupy residues 62–71 (SETFKNGQDS) and 204–217 (LKQT…GNST). Residues 550 to 594 (LQLLVNNLQEYIENLNVTLLESLKERDDLNSDQDDILHDLEKINN) are a coiled coil.

Belongs to the SCHIP1 family. Interacts with ex; the interaction results in recruitment of Schip1 to the apical cell membrane. Interacts with Tao; the interaction enhances Tao kinase activity. Interacts with Mer. In eye disks of the third instar larvae, expressed in all cells (at protein level).

The protein localises to the cell junction. It localises to the adherens junction. The protein resides in the apical cell membrane. Regulator of the Hippo/SWH (Sav/Wts/Hpo) signaling pathway, a signaling pathway that plays a pivotal role in organ size control and tumor suppression by restricting proliferation and promoting apoptosis. The core of this pathway is composed of a kinase cascade wherein Hippo (hpo), in complex with its regulatory protein Salvador (sav), phosphorylates and activates Warts (wts) in complex with its regulatory protein Mats, which in turn phosphorylates and inactivates the Yorkie (yki) oncoprotein. Schip1 promotes kinase activity of Tao and enhances phosphorylation of hpo by Tao. The protein is Schwannomin-interacting protein 1 homolog of Drosophila melanogaster (Fruit fly).